A 357-amino-acid polypeptide reads, in one-letter code: Sulfate/thiosulfate import ATP-binding protein CysA (357 aa).

In terms of domain architecture, ABC transporter spans 3–237; sequence IVIQNVSKSF…PKSPFVYDFL (235 aa). 35–42 provides a ligand contact to ATP; that stretch reads GPSGSGKT.

This sequence belongs to the ABC transporter superfamily. Sulfate/tungstate importer (TC 3.A.1.6) family. As to quaternary structure, the complex is composed of two ATP-binding proteins (CysA), two transmembrane proteins (CysT and CysW) and a solute-binding protein (CysP).

Its subcellular location is the cell membrane. The catalysed reaction is sulfate(out) + ATP + H2O = sulfate(in) + ADP + phosphate + H(+). The enzyme catalyses thiosulfate(out) + ATP + H2O = thiosulfate(in) + ADP + phosphate + H(+). Part of the ABC transporter complex CysAWTP involved in sulfate/thiosulfate import. Responsible for energy coupling to the transport system. The protein is Sulfate/thiosulfate import ATP-binding protein CysA of Halalkalibacterium halodurans (strain ATCC BAA-125 / DSM 18197 / FERM 7344 / JCM 9153 / C-125) (Bacillus halodurans).